The sequence spans 80 residues: MKYFVVFCVLIIAVAAFTSAAEDGEVFEENPLEFPKTIQKRCISARYPCSNSKDCCSGNCGTFWTCYIRKDPCSKECLAP.

Positions 1-20 (MKYFVVFCVLIIAVAAFTSA) are cleaved as a signal peptide. Positions 21-41 (AEDGEVFEENPLEFPKTIQKR) are excised as a propeptide. Disulfide bonds link C42–C56, C49–C60, C55–C77, and C66–C73.

This sequence belongs to the neurotoxin 13 (insecticidal toxin ABC) family. 02 (Calisoga) subfamily. As to expression, expressed by the venom gland.

It is found in the secreted. In terms of biological role, causes paralysis to insect larvae (H.virescens). This toxin is active only on insects. The sequence is that of U1-nemetoxin-Csp1a from Calisoga sp. (Spider).